A 228-amino-acid chain; its full sequence is Triosephosphate isomerase (228 aa).

Asn11–Lys13 is a binding site for substrate. His95 acts as the Electrophile in catalysis. Glu143 (proton acceptor) is an active-site residue. Substrate is bound by residues Ile148, Gly183, and Ala204 to Ser205.

This sequence belongs to the triosephosphate isomerase family. In terms of assembly, homotetramer; dimer of dimers.

It is found in the cytoplasm. The enzyme catalyses D-glyceraldehyde 3-phosphate = dihydroxyacetone phosphate. It participates in carbohydrate biosynthesis; gluconeogenesis. The protein operates within carbohydrate degradation; glycolysis; D-glyceraldehyde 3-phosphate from glycerone phosphate: step 1/1. Its function is as follows. Involved in the gluconeogenesis. Catalyzes stereospecifically the conversion of dihydroxyacetone phosphate (DHAP) to D-glyceraldehyde-3-phosphate (G3P). In Pyrococcus abyssi (strain GE5 / Orsay), this protein is Triosephosphate isomerase.